The primary structure comprises 321 residues: Phospho-N-acetylmuramoyl-pentapeptide-transferase (321 aa).

Transmembrane regions (helical) follow at residues 1-21 (MIFV…PVLI), 50-70 (MGGL…IIFV), 76-96 (IILL…DDYI), 112-132 (FLAQ…FHLV), 140-160 (IPFT…IVFL), 176-196 (GLAT…SFVL), 200-220 (AIGI…PYNI), 225-245 (VFMG…ISIM), 250-270 (LSLI…MLQV), and 300-320 (VVTV…WIGV).

The protein belongs to the glycosyltransferase 4 family. MraY subfamily. Mg(2+) serves as cofactor.

The protein localises to the cell membrane. It catalyses the reaction UDP-N-acetyl-alpha-D-muramoyl-L-alanyl-gamma-D-glutamyl-L-lysyl-D-alanyl-D-alanine + di-trans,octa-cis-undecaprenyl phosphate = Mur2Ac(oyl-L-Ala-gamma-D-Glu-L-Lys-D-Ala-D-Ala)-di-trans,octa-cis-undecaprenyl diphosphate + UMP. It participates in cell wall biogenesis; peptidoglycan biosynthesis. Catalyzes the initial step of the lipid cycle reactions in the biosynthesis of the cell wall peptidoglycan: transfers peptidoglycan precursor phospho-MurNAc-pentapeptide from UDP-MurNAc-pentapeptide onto the lipid carrier undecaprenyl phosphate, yielding undecaprenyl-pyrophosphoryl-MurNAc-pentapeptide, known as lipid I. The chain is Phospho-N-acetylmuramoyl-pentapeptide-transferase from Staphylococcus aureus (strain bovine RF122 / ET3-1).